A 384-amino-acid chain; its full sequence is Organic solute transporter alpha-like protein 1 (384 aa).

At 1–38 the chain is on the extracellular side; that stretch reads MEIVKTIIPHNRSYIEPPIPSATEWLANMSVMHVSCLT. N-linked (GlcNAc...) asparagine glycans are attached at residues N11 and N28. A helical membrane pass occupies residues 39-59; the sequence is IACVFVAITFLSSFFHLFFVL. Over 60 to 70 the chain is Cytoplasmic; sequence KYVSNERIRND. Residues 71 to 91 form a helical membrane-spanning segment; the sequence is MYALIFMFPITTFASLVGMFI. Residues 92 to 93 lie on the Extracellular side of the membrane; sequence PR. Residues 94–114 form a helical membrane-spanning segment; the sequence is AAIFLYAVSLVYFMFTLFIMV. Topologically, residues 115-165 are cytoplasmic; it reads TLLFNIFGGRQEMSAYLLQRNIRVNFTVPPLCFFKFLPTVESTDQNLRRIE. The chain crosses the membrane as a helical span at residues 166–186; that stretch reads WLVFQTPIIRTLLELVSVVVS. Over 187-202 the chain is Extracellular; sequence MEQEGRRESVWFVFSQ. Residues 203–223 form a helical membrane-spanning segment; the sequence is LMALLSMCIAFYGCYVMVPLG. Over 224–240 the chain is Cytoplasmic; sequence REKHAPYRFDFLFRTCD. The chain crosses the membrane as a helical span at residues 241–261; it reads IAQCIYTIQKFVFEFAAAVGL. Residues 262–273 lie on the Extracellular side of the membrane; sequence ITSDRYLPAAAK. The chain crosses the membrane as a helical span at residues 274 to 294; the sequence is ALWWASFMCTWEMMLLSALCS. Topologically, residues 295–384 are cytoplasmic; sequence YCLRPAKCKF…FDSLSQIQGQ (90 aa).

Belongs to the OST-alpha family.

Its subcellular location is the cell membrane. Functionally, probable transporter. The protein is Organic solute transporter alpha-like protein 1 (osta-1) of Caenorhabditis elegans.